A 332-amino-acid chain; its full sequence is Phosphate acyltransferase (332 aa).

This sequence belongs to the PlsX family. In terms of assembly, homodimer. Probably interacts with PlsY.

The protein localises to the cytoplasm. It carries out the reaction a fatty acyl-[ACP] + phosphate = an acyl phosphate + holo-[ACP]. It participates in lipid metabolism; phospholipid metabolism. Functionally, catalyzes the reversible formation of acyl-phosphate (acyl-PO(4)) from acyl-[acyl-carrier-protein] (acyl-ACP). This enzyme utilizes acyl-ACP as fatty acyl donor, but not acyl-CoA. This chain is Phosphate acyltransferase, found in Fusobacterium nucleatum subsp. nucleatum (strain ATCC 25586 / DSM 15643 / BCRC 10681 / CIP 101130 / JCM 8532 / KCTC 2640 / LMG 13131 / VPI 4355).